A 528-amino-acid chain; its full sequence is Importin subunit alpha-7 (528 aa).

Positions 1-56 (MKGGETMSVRRSGYKAVVDGVGGRRRREDDMVEIRKAKREESLLKKRREALPHSPS) constitute an IBB domain. ARM repeat units follow at residues 93 to 133 (NVRV…NIAS), 136 to 175 (SENT…NISG), 178 to 218 (PRCR…NLCR), 220 to 259 (KPQP…YLSD), 262 to 301 (NEKI…NIVT), 304 to 344 (DSQT…NITA), 347 to 386 (QSQI…NAIA), and 390 to 429 (YKQI…KILK).

Belongs to the importin alpha family. In terms of assembly, forms a complex with importin subunit beta-1.

It is found in the nucleus envelope. In terms of biological role, binds to conventional NLS motifs and mediates nuclear protein import across the nuclear envelope. Acts as a cellular receptor for the nuclear import of the virD2 protein of Agrobacterium, but is not essential for Agrobacterium-mediated root transformation. This Arabidopsis thaliana (Mouse-ear cress) protein is Importin subunit alpha-7.